Here is a 287-residue protein sequence, read N- to C-terminus: Glycine--tRNA ligase alpha subunit (287 aa).

It belongs to the class-II aminoacyl-tRNA synthetase family. As to quaternary structure, tetramer of two alpha and two beta subunits.

It is found in the cytoplasm. The catalysed reaction is tRNA(Gly) + glycine + ATP = glycyl-tRNA(Gly) + AMP + diphosphate. In Campylobacter jejuni subsp. jejuni serotype O:23/36 (strain 81-176), this protein is Glycine--tRNA ligase alpha subunit.